The primary structure comprises 234 residues: Purine nucleoside phosphorylase DeoD-type (234 aa).

His-4 contributes to the a purine D-ribonucleoside binding site. Phosphate is bound by residues Gly-20, Arg-24, Arg-43, and Arg-87–Ser-90. Residues Glu-162, Glu-179–Glu-181, and Ser-203–Asp-204 contribute to the a purine D-ribonucleoside site. The active-site Proton donor is Asp-204.

The protein belongs to the PNP/UDP phosphorylase family. In terms of assembly, homohexamer; trimer of homodimers.

The enzyme catalyses a purine D-ribonucleoside + phosphate = a purine nucleobase + alpha-D-ribose 1-phosphate. The catalysed reaction is a purine 2'-deoxy-D-ribonucleoside + phosphate = a purine nucleobase + 2-deoxy-alpha-D-ribose 1-phosphate. In terms of biological role, catalyzes the reversible phosphorolytic breakdown of the N-glycosidic bond in the beta-(deoxy)ribonucleoside molecules, with the formation of the corresponding free purine bases and pentose-1-phosphate. The chain is Purine nucleoside phosphorylase DeoD-type from Jannaschia sp. (strain CCS1).